Here is a 326-residue protein sequence, read N- to C-terminus: MEVADRMMSNGVDNDRRSSPSPHRGNGDMNNGNGNGNRDSRERSPPRGNSRERSPPRGGSPNRGGSPNRGGSPNRGGSPNRGGSPSRDDKRRYGNGGNGETRNRLANTASPSNVLGVFGLAPQTEERDLKDEFSRFGKIDHVDLIMDRKTGRSKCFGFVYFENKEDAVRAKEECQDLQLHGKSIRTDFSATKKPHEPTPGKYFGNPRYDSRRSPPRFSPYGGGDRYGRGDYGGRGGGGDRYGRDDRGGDRYGRDDRGGDRYGGRDDRGGDRYGGRDERGGDRGGDRYGRDDRDRHREDSRDRYNDRGGDRYNDRFRDERPRDSYRR.

Disordered stretches follow at residues 1–114 (MEVA…PSNV) and 179–326 (LHGK…SYRR). Basic and acidic residues predominate over residues 38 to 55 (RDSRERSPPRGNSRERSP). The span at 56-85 (PRGGSPNRGGSPNRGGSPNRGGSPNRGGSP) shows a compositional bias: low complexity. Positions 104-113 (RLANTASPSN) are enriched in polar residues. The region spanning 113–191 (NVLGVFGLAP…KSIRTDFSAT (79 aa)) is the RRM domain. Over residues 220-239 (YGGGDRYGRGDYGGRGGGGD) the composition is skewed to gly residues. Residues 240-326 (RYGRDDRGGD…DERPRDSYRR (87 aa)) show a composition bias toward basic and acidic residues.

Belongs to the splicing factor SR family.

The protein resides in the nucleus. In terms of biological role, sequence-specific RNA-binding protein which participates in the control of pre-mRNA splicing. The chain is Transformer-2 protein homolog (tra2) from Dictyostelium discoideum (Social amoeba).